We begin with the raw amino-acid sequence, 218 residues long: Phosphatidylserine decarboxylase proenzyme (218 aa).

Residue Ser187 is the Schiff-base intermediate with substrate; via pyruvic acid of the active site. Ser187 carries the post-translational modification Pyruvic acid (Ser); by autocatalysis.

It belongs to the phosphatidylserine decarboxylase family. PSD-A subfamily. In terms of assembly, heterodimer of a large membrane-associated beta subunit and a small pyruvoyl-containing alpha subunit. The cofactor is pyruvate. Post-translationally, is synthesized initially as an inactive proenzyme. Formation of the active enzyme involves a self-maturation process in which the active site pyruvoyl group is generated from an internal serine residue via an autocatalytic post-translational modification. Two non-identical subunits are generated from the proenzyme in this reaction, and the pyruvate is formed at the N-terminus of the alpha chain, which is derived from the carboxyl end of the proenzyme. The post-translation cleavage follows an unusual pathway, termed non-hydrolytic serinolysis, in which the side chain hydroxyl group of the serine supplies its oxygen atom to form the C-terminus of the beta chain, while the remainder of the serine residue undergoes an oxidative deamination to produce ammonia and the pyruvoyl prosthetic group on the alpha chain.

The protein resides in the cell membrane. The catalysed reaction is a 1,2-diacyl-sn-glycero-3-phospho-L-serine + H(+) = a 1,2-diacyl-sn-glycero-3-phosphoethanolamine + CO2. It functions in the pathway phospholipid metabolism; phosphatidylethanolamine biosynthesis; phosphatidylethanolamine from CDP-diacylglycerol: step 2/2. Its function is as follows. Catalyzes the formation of phosphatidylethanolamine (PtdEtn) from phosphatidylserine (PtdSer). The polypeptide is Phosphatidylserine decarboxylase proenzyme (Geobacter metallireducens (strain ATCC 53774 / DSM 7210 / GS-15)).